The primary structure comprises 154 residues: Transcription antitermination protein NusB (154 aa).

Residues 132–154 (KDKQSPQSTPLDDSDKDESDQTN) are disordered. Over residues 143–154 (DDSDKDESDQTN) the composition is skewed to acidic residues.

It belongs to the NusB family.

Functionally, involved in transcription antitermination. Required for transcription of ribosomal RNA (rRNA) genes. Binds specifically to the boxA antiterminator sequence of the ribosomal RNA (rrn) operons. This is Transcription antitermination protein NusB from Bifidobacterium animalis subsp. lactis (strain AD011).